Reading from the N-terminus, the 381-residue chain is MRCLVVLLAVFALSQGAEITRIPLYKGKPLRKALKERGLLEDFLQKQQYGVSSEYSGFGEVASVPLTNYLDSQYFGKIYLGTPPQEFTVLFDTGSSDFWVPSIYCKSNACKNHQRFDPRKSSTFQNLGKPLSIRYGTGSMQGILGYDTVTVSNIVDIQQTVGLSTQEPGDVFTYAEFDGILGMAYPSLASEYSVPVFDNMMDRRLVAQDLFSVYMDRSGQGSMLTLGAIDPSYYTGSLHWVPVTLQKYWQFTVDSVTISGAVVACEGGCQAILDTGTSKLVGPSSDILNIQQAIGATQNQYGEFDIDCDSLSSMPTVVFEINGKMYPLTPYAYTSQEEGFCTSGFQGENHSHQWILGDVFIREYYSVFDRANNLVGLAKAI.

Residues 1–16 (MRCLVVLLAVFALSQG) form the signal peptide. Residues 17-58 (AEITRIPLYKGKPLRKALKERGLLEDFLQKQQYGVSSEYSGF) constitute a propeptide, activation peptide. A Peptidase A1 domain is found at 74 to 378 (YFGKIYLGTP…DRANNLVGLA (305 aa)). The active site involves D92. 2 cysteine pairs are disulfide-bonded: C105–C110 and C265–C269. D274 is a catalytic residue. An intrachain disulfide couples C308 to C341.

The protein belongs to the peptidase A1 family. As to quaternary structure, monomer.

It carries out the reaction Broad specificity similar to that of pepsin A. Clots milk by cleavage of a single 104-Ser-Phe-|-Met-Ala-107 bond in kappa-chain of casein.. Chymosin is synthesized in the mucosa of the stomach. The enzyme hydrolyzes casein to paracasein. This chain is Chymosin (CYM), found in Ovis aries (Sheep).